The sequence spans 131 residues: Small ribosomal subunit protein uS9 (131 aa).

The disordered stretch occupies residues 102-131 (AGFLTRDPRMKERRKYGLKKARKAPQFSKR). Over residues 112–131 (KERRKYGLKKARKAPQFSKR) the composition is skewed to basic residues.

It belongs to the universal ribosomal protein uS9 family.

This chain is Small ribosomal subunit protein uS9, found in Desulfitobacterium hafniense (strain DSM 10664 / DCB-2).